A 744-amino-acid chain; its full sequence is Tripartite motif-containing protein 2 (744 aa).

S10 bears the Phosphoserine mark. The segment at 23 to 64 (CSICLERYKNPKVLPCLHTFCERCLQNYIPAHSLTLSCPVCR) adopts an RING-type zinc-finger fold. The segment at 113 to 154 (GKPLSCPNHDGNVMEFYCQSCETAMCRECTEGEHAEHPTVPL) adopts a B box-type zinc-finger fold. Residues C118, H121, C141, and H146 each contribute to the Zn(2+) site. The Filamin repeat unit spans residues 320–421 (TTNAVASETV…IRGSPFKLKV (102 aa)). T371 carries the post-translational modification Phosphothreonine. S375, S424, and S428 each carry phosphoserine. Residues 432–462 (EGVKRRVKSPGSGHVKQKAVKRPASMYSTGK) are disordered. NHL repeat units lie at residues 473–516 (IFRV…FSND), 520–563 (KSRF…FSND), 564–605 (GKFK…FQPN), 609–652 (VTRF…FNQE), 656–699 (MLKF…FDGS), and 700–743 (GSFL…YRYL).

This sequence belongs to the TRIM/RBCC family. Forms homooligomers. Interacts with TRIM3; this interaction reduces TRIM2 activity. Interacts with myosin V; myosin V may not be a substrate for ubiquitination. Interacts with NEFL. Interacts with phosphorylated BCL2L11. Interacts with SIRPA. RING-type zinc finger-dependent and UBE2D1-dependent autoubiquitination. In terms of tissue distribution, highly expressed in the cerebellum, hippocampus, retina and spinal cord. In the cerebellum, strongest expression in Purkinje cells and in the deep cerebellar nuclei. In retina, high expression in the ganglionic cell layer, inner nuclear layer and inthe outer plexiform layer. Particularly high expression in the hippocampus, in pyramidal cells of CA1-CA3 hippocampal areas and ingranule cells of the dentate gyrus.

The protein localises to the cytoplasm. The enzyme catalyses S-ubiquitinyl-[E2 ubiquitin-conjugating enzyme]-L-cysteine + [acceptor protein]-L-lysine = [E2 ubiquitin-conjugating enzyme]-L-cysteine + N(6)-ubiquitinyl-[acceptor protein]-L-lysine.. It functions in the pathway protein modification; protein ubiquitination. Functionally, UBE2D1-dependent E3 ubiquitin-protein ligase that mediates the ubiquitination of NEFL and of phosphorylated BCL2L11. Plays a neuroprotective function. May play a role in neuronal rapid ischemic tolerance. Plays a role in antiviral immunity and limits new world arenavirus infection independently of its ubiquitin ligase activity by decreasing virus internalization. This chain is Tripartite motif-containing protein 2 (Trim2), found in Mus musculus (Mouse).